The following is a 79-amino-acid chain: MKENIHPPYKQIKVTCSCGNTFMTGSTLDRELHLEICSACHPFYTGQQKMVDTAGRVERFRKKYAKRRAANASPEDEKK.

Zn(2+) contacts are provided by cysteine 16, cysteine 18, cysteine 37, and cysteine 40.

This sequence belongs to the bacterial ribosomal protein bL31 family. Type A subfamily. As to quaternary structure, part of the 50S ribosomal subunit. The cofactor is Zn(2+).

Functionally, binds the 23S rRNA. This Coxiella burnetii (strain CbuG_Q212) (Coxiella burnetii (strain Q212)) protein is Large ribosomal subunit protein bL31.